The sequence spans 347 residues: Transcription factor EC (347 aa).

The necessary for transcriptional transactivation stretch occupies residues 1-119 (MTLDHQIINP…GLTSASCPSS (119 aa)). In terms of domain architecture, bHLH spans 139–192 (QKKDNHNLIERRRRYNINYRIKELGTLIPKSNDPDMRWNKGTILKASVEYIKWL). Positions 271 to 347 (PSPEFCDQAI…SFSSDDGDEL (77 aa)) are necessary for transcriptional transactivation. A disordered region spans residues 319–347 (DPLLSATSPAVSKESSRRSSFSSDDGDEL). Over residues 326–341 (SPAVSKESSRRSSFSS) the composition is skewed to low complexity.

The protein belongs to the MiT/TFE family. As to quaternary structure, homodimer. Forms heterodimers with MITF and TFE3. Interacts with MITF.

It localises to the nucleus. Its function is as follows. Transcriptional regulator that acts as a repressor or an activator. Acts as a transcriptional repressor on minimal promoter containing element F (that includes an E-box sequence). Binds to element F in an E-box sequence-specific manner. Acts as a transcriptional transactivator on the proximal promoter region of the tartrate-resistant acid phosphatase (TRAP) E-box containing promoter. Collaborates with MITF in target gene activation. Acts as a transcriptional repressor on minimal promoter containing mu E3 enhancer sequence. Binds to mu E3 DNA sequence of the immunoglobulin heavy-chain gene enhancer. Binds DNA in a homo- or heterodimeric form. This Pan troglodytes (Chimpanzee) protein is Transcription factor EC (TFEC).